The chain runs to 86 residues: Electron transfer flavoprotein regulatory factor 1 (86 aa).

It belongs to the complex I LYR family. In terms of assembly, homotetramer. Interacts with NDUFAB1. Interacts with ETFA. Interacts with ETFB.

It localises to the mitochondrion. Functionally, acts as a regulator of the electron transfer flavoprotein by promoting the removal of flavin from the ETF holoenzyme (composed of ETFA and ETFB). This Mus musculus (Mouse) protein is Electron transfer flavoprotein regulatory factor 1.